The primary structure comprises 935 residues: C-1-tetrahydrofolate synthase, cytoplasmic (935 aa).

An N-acetylmethionine modification is found at Met1. Residues 2–291 (APAGILNGKV…MLMQSTVESA (290 aa)) are methylenetetrahydrofolate dehydrogenase and methenyltetrahydrofolate cyclohydrolase (D/C) domain. Substrate is bound by residues 52–56 (YINVK) and 99–101 (VQL). Lys56 is an active-site residue. NADP(+) contacts are provided by residues 172–174 (GRS) and Ser197. Residue 272–276 (PGGVG) coordinates substrate. A formyltetrahydrofolate synthetase domain region spans residues 310–935 (LNLKTPVPSD…PETEQVNGLF (626 aa)). Ser318 bears the Phosphoserine mark. 380-387 (TPLGEGKS) serves as a coordination point for ATP. Ser413 and Ser490 each carry phosphoserine.

It in the N-terminal section; belongs to the tetrahydrofolate dehydrogenase/cyclohydrolase family. In the C-terminal section; belongs to the formate--tetrahydrofolate ligase family. In terms of assembly, homodimer.

It localises to the cytoplasm. The catalysed reaction is (6R)-5,10-methylene-5,6,7,8-tetrahydrofolate + NADP(+) = (6R)-5,10-methenyltetrahydrofolate + NADPH. It catalyses the reaction (6R)-5,10-methenyltetrahydrofolate + H2O = (6R)-10-formyltetrahydrofolate + H(+). It carries out the reaction (6S)-5,6,7,8-tetrahydrofolate + formate + ATP = (6R)-10-formyltetrahydrofolate + ADP + phosphate. Its pathway is one-carbon metabolism; tetrahydrofolate interconversion. In terms of biological role, trifunctional enzyme that catalyzes the interconversion of three forms of one-carbon-substituted tetrahydrofolate: (6R)-5,10-methylene-5,6,7,8-tetrahydrofolate, 5,10-methenyltetrahydrofolate and (6S)-10-formyltetrahydrofolate. These derivatives of tetrahydrofolate are differentially required in nucleotide and amino acid biosynthesis, (6S)-10-formyltetrahydrofolate being required for purine biosynthesis while (6R)-5,10-methylene-5,6,7,8-tetrahydrofolate is used for serine and methionine biosynthesis for instance. The polypeptide is C-1-tetrahydrofolate synthase, cytoplasmic (Mthfd1) (Rattus norvegicus (Rat)).